The sequence spans 338 residues: Malate dehydrogenase, mitochondrial (338 aa).

A mitochondrion-targeting transit peptide spans 1-24 (MLSALARPAGAALRRSFSTSXQNN). Residues 31–37 (GASGGIG) and Asp57 contribute to the NAD(+) site. A glycan (O-linked (GlcNAc) serine) is linked at Ser33. N6-acetyllysine; alternate occurs at positions 78 and 91. N6-succinyllysine; alternate is present on residues Lys78 and Lys91. The substrate site is built by Arg104 and Arg110. NAD(+) is bound by residues Asn117 and 140 to 142 (ISN). Asn142 contacts substrate. Residue Lys165 is modified to N6-acetyllysine. Arg176 contacts substrate. Position 185 is an N6-acetyllysine; alternate (Lys185). Lys185 is modified (N6-succinyllysine; alternate). The active-site Proton acceptor is the His200. An N6-succinyllysine modification is found at Lys203. An N6-acetyllysine; alternate mark is found at Lys215 and Lys239. Residues Lys215 and Lys239 each carry the N6-succinyllysine; alternate modification. Lys239 carries the post-translational modification N6-malonyllysine; alternate. A Phosphoserine modification is found at Ser246. Position 251 (Met251) interacts with NAD(+). Lys269 is subject to N6-succinyllysine. An N6-acetyllysine; alternate mark is found at Lys296, Lys301, Lys307, Lys314, and Lys324. An N6-succinyllysine; alternate mark is found at Lys296, Lys301, Lys307, Lys314, and Lys324. Lys307 is modified (N6-malonyllysine; alternate). Ser326 carries the post-translational modification Phosphoserine. N6-acetyllysine; alternate is present on residues Lys328, Lys329, and Lys335. Lys328 bears the N6-succinyllysine; alternate mark. The residue at position 329 (Lys329) is an N6-malonyllysine; alternate. Position 335 is an N6-succinyllysine; alternate (Lys335).

It belongs to the LDH/MDH superfamily. MDH type 1 family. Homodimer. Acetylation is enhanced after treatment either with trichostin A (TCA) or with nicotinamide (NAM) with the appearance of tri- and tetraacetylations. Glucose also increases acetylation.

The protein resides in the mitochondrion matrix. The catalysed reaction is (S)-malate + NAD(+) = oxaloacetate + NADH + H(+). With respect to regulation, enzyme activity is enhanced by acetylation. This chain is Malate dehydrogenase, mitochondrial (MDH2), found in Sus scrofa (Pig).